The following is a 438-amino-acid chain: Transposon Ty2-LR1 Gag polyprotein (438 aa).

Composition is skewed to polar residues over residues 1-11 (MESQQLHQNPH), 19-39 (ASVT…SASN), and 49-60 (KVNSQQETTPGT). Disordered regions lie at residues 1–86 (MESQ…GQYQ), 364–397 (KNVS…AKAH), and 419–438 (SSQY…TERI). Residues 295-397 (ENNINVSDRL…SSKPRAAKAH (103 aa)) are RNA-binding. The segment covering 369–381 (TSPNTTNTKVTTR) has biased composition (low complexity).

As to quaternary structure, homotrimer.

Its subcellular location is the cytoplasm. In terms of biological role, capsid protein (CA) is the structural component of the virus-like particle (VLP), forming the shell that encapsulates the retrotransposons dimeric RNA genome. The particles are assembled from trimer-clustered units and there are holes in the capsid shells that allow for the diffusion of macromolecules. CA also has nucleocapsid-like chaperone activity, promoting primer tRNA(i)-Met annealing to the multipartite primer-binding site (PBS), dimerization of Ty2 RNA and initiation of reverse transcription. This Saccharomyces cerevisiae (strain ATCC 204508 / S288c) (Baker's yeast) protein is Transposon Ty2-LR1 Gag polyprotein (TY2A-LR1).